Consider the following 140-residue polypeptide: Nucleoside diphosphate kinase (140 aa).

6 residues coordinate ATP: Lys11, Phe59, Arg87, Thr93, Arg104, and Asn114. His117 acts as the Pros-phosphohistidine intermediate in catalysis.

The protein belongs to the NDK family. As to quaternary structure, homotetramer. Requires Mg(2+) as cofactor.

The protein resides in the cytoplasm. It carries out the reaction a 2'-deoxyribonucleoside 5'-diphosphate + ATP = a 2'-deoxyribonucleoside 5'-triphosphate + ADP. It catalyses the reaction a ribonucleoside 5'-diphosphate + ATP = a ribonucleoside 5'-triphosphate + ADP. Its function is as follows. Major role in the synthesis of nucleoside triphosphates other than ATP. The ATP gamma phosphate is transferred to the NDP beta phosphate via a ping-pong mechanism, using a phosphorylated active-site intermediate. The sequence is that of Nucleoside diphosphate kinase from Maricaulis maris (strain MCS10) (Caulobacter maris).